Consider the following 34-residue polypeptide: Protamine-Z1/Z2 (34 aa).

The tract at residues P1–R34 is disordered.

In terms of tissue distribution, testis.

It is found in the nucleus. The protein localises to the chromosome. Its function is as follows. Protamines substitute for histones in the chromatin of sperm during the haploid phase of spermatogenesis. They compact sperm DNA into a highly condensed, stable and inactive complex. The protein is Protamine-Z1/Z2 of Thunnus thynnus (Atlantic bluefin tuna).